A 432-amino-acid polypeptide reads, in one-letter code: Keratin, type I cytoskeletal 18-B (432 aa).

The span at 1-21 (MSYSRSMYSSSSVVGGSPYRS) shows a compositional bias: low complexity. The interval 1-44 (MSYSRSMYSSSSVVGGSPYRSLSSAPRFAPGSSAASVHAGPGGS) is disordered. Positions 2–82 (SYSRSMYSSS…NVSLMGGAQN (81 aa)) are head. The coil 1A stretch occupies residues 83–118 (EKETMQDLNDRLASYLERVRSLETANKELEVQIRQH). The IF rod domain occupies 83–393 (EKETMQDLND…RLLEGDSFDL (311 aa)). The interval 119–134 (TEKKGPAKDWSPYYKA) is linker 1. Residues 135–226 (IEDLKKQVFD…KNHQDDVNEL (92 aa)) are coil 1B. The segment at 227-250 (QAQIARSAVTVEVDAPKSQDLGKI) is linker 12. The tract at residues 251–388 (MAELRAQYDG…IHTYRRLLEG (138 aa)) is coil 2. The segment at 389–432 (DSFDLQDAVPTVTTQTVKKVITTTQRIVDGKVVAESNDTEVLKA) is tail.

This sequence belongs to the intermediate filament family. Heterotetramer of two type I and two type II keratins. Keratin-18 associates with keratin-8. Post-translationally, phosphorylated. Proteolytically cleaved by caspases during epithelial cell apoptosis.

Functionally, when phosphorylated, plays a role in filament reorganization. The chain is Keratin, type I cytoskeletal 18-B (krt18-b) from Xenopus laevis (African clawed frog).